The chain runs to 190 residues: Threonylcarbamoyl-AMP synthase (190 aa).

In terms of domain architecture, YrdC-like spans 7 to 190; that stretch reads LSSLIKCIRK…IVNGKLIRYV (184 aa).

The protein belongs to the SUA5 family. TsaC subfamily.

It localises to the cytoplasm. It carries out the reaction L-threonine + hydrogencarbonate + ATP = L-threonylcarbamoyladenylate + diphosphate + H2O. Required for the formation of a threonylcarbamoyl group on adenosine at position 37 (t(6)A37) in tRNAs that read codons beginning with adenine. Catalyzes the conversion of L-threonine, HCO(3)(-)/CO(2) and ATP to give threonylcarbamoyl-AMP (TC-AMP) as the acyladenylate intermediate, with the release of diphosphate. This chain is Threonylcarbamoyl-AMP synthase, found in Buchnera aphidicola subsp. Schizaphis graminum (strain Sg).